The following is a 536-amino-acid chain: Light-independent protochlorophyllide reductase subunit B (536 aa).

[4Fe-4S] cluster is bound at residue aspartate 36. Catalysis depends on aspartate 274, which acts as the Proton donor. Glycine 409–leucine 410 lines the substrate pocket. A disordered region spans residues aspartate 426–alanine 448.

The protein belongs to the ChlB/BchB/BchZ family. In terms of assembly, protochlorophyllide reductase is composed of three subunits; BchL, BchN and BchB. Forms a heterotetramer of two BchB and two BchN subunits. Requires [4Fe-4S] cluster as cofactor.

It catalyses the reaction chlorophyllide a + oxidized 2[4Fe-4S]-[ferredoxin] + 2 ADP + 2 phosphate = protochlorophyllide a + reduced 2[4Fe-4S]-[ferredoxin] + 2 ATP + 2 H2O. It functions in the pathway porphyrin-containing compound metabolism; bacteriochlorophyll biosynthesis (light-independent). In terms of biological role, component of the dark-operative protochlorophyllide reductase (DPOR) that uses Mg-ATP and reduced ferredoxin to reduce ring D of protochlorophyllide (Pchlide) to form chlorophyllide a (Chlide). This reaction is light-independent. The NB-protein (BchN-BchB) is the catalytic component of the complex. In Cereibacter sphaeroides (strain KD131 / KCTC 12085) (Rhodobacter sphaeroides), this protein is Light-independent protochlorophyllide reductase subunit B.